Consider the following 614-residue polypeptide: Zinc finger and SCAN domain-containing protein 2 (614 aa).

3 disordered regions span residues 1–25 (MAAE…EDEQ), 42–73 (AVLQ…EGPQ), and 162–200 (NISG…RVVP). In terms of domain architecture, SCAN box spans 69 to 127 (AEGPQGALVRFRELCRRWLRPEVHTKEQMLTVLPREIQAWLQEHRPESSEEAVALVEDL). 14 C2H2-type zinc fingers span residues 222 to 244 (YECP…ERTH), 250 to 272 (YKCD…QTTH), 278 to 300 (YKCR…QRIH), 306 to 328 (FQCA…QRTH), 334 to 356 (YSCP…QGIH), 362 to 384 (YACK…QRIH), 390 to 412 (YKCT…RRTH), 418 to 440 (YQCG…RRTH), 446 to 468 (YKCG…QGTH), 474 to 496 (YECL…QRTH), 502 to 524 (YRCG…QRTH), 530 to 552 (YKCL…QRAH), 558 to 580 (YRCP…QRIH), and 586 to 608 (YRCP…QRTH).

This sequence belongs to the krueppel C2H2-type zinc-finger protein family. As to expression, in the adult, predominantly found in spermatids. Also present in the embryo.

It localises to the nucleus. May be involved in transcriptional regulation during the post-meiotic stages of spermatogenesis. This chain is Zinc finger and SCAN domain-containing protein 2 (Zscan2), found in Mus musculus (Mouse).